Reading from the N-terminus, the 273-residue chain is Large ribosomal subunit protein uL2 (273 aa).

Residues 228 to 273 (VDHPHGGGEGKTSGGRHPVTPWGFPTKGKKTRKNKRTSKFIVKKRK) form a disordered region. Residues 254–273 (KGKKTRKNKRTSKFIVKKRK) show a composition bias toward basic residues.

Belongs to the universal ribosomal protein uL2 family. Part of the 50S ribosomal subunit. Forms a bridge to the 30S subunit in the 70S ribosome.

Functionally, one of the primary rRNA binding proteins. Required for association of the 30S and 50S subunits to form the 70S ribosome, for tRNA binding and peptide bond formation. It has been suggested to have peptidyltransferase activity; this is somewhat controversial. Makes several contacts with the 16S rRNA in the 70S ribosome. The protein is Large ribosomal subunit protein uL2 of Rickettsia rickettsii (strain Iowa).